The sequence spans 197 residues: MAVHKVSFVAHLLVLGMFLLLVDAKACTKECGNFAYGICPRSQGTPDDPICTTCCAGYKGCNYYSANGTFICEGSSDPKNPNVCPQFCDPDIAYSKCPRSEGETIINPTGCTTCCTGYKGCYYFGQDGEFVCEGESDEPKSCTTECDPRVATISCPFSGLVKINQECINCCNADKGCELYDNDGSLICTGGEPQSAA.

The N-terminal stretch at 1–24 (MAVHKVSFVAHLLVLGMFLLLVDA) is a signal peptide. 3 consecutive repeat copies span residues 24–80 (AKAC…DPKN), 81–140 (PNVC…DEPK), and 141–196 (SCTT…PQSA). 8 disulfides stabilise this stretch: C27–C115, C31–C111, C39–C121, C51–C88, C54–C72, C55–C84, C61–C97, and C114–C132.

This sequence belongs to the protease inhibitor I20 (potato type II proteinase inhibitor) family.

The polypeptide is Proteinase inhibitor type-2 (Nicotiana tabacum (Common tobacco)).